The following is a 143-amino-acid chain: Transcriptional regulator MraZ (143 aa).

2 consecutive SpoVT-AbrB domains span residues 5–47 and 76–119; these read EYRH…PQSE and ASEC…SKTL.

It belongs to the MraZ family. Forms oligomers.

The protein resides in the cytoplasm. It is found in the nucleoid. The polypeptide is Transcriptional regulator MraZ (Shouchella clausii (strain KSM-K16) (Alkalihalobacillus clausii)).